The sequence spans 70 residues: Cold shock-like protein CspA (70 aa).

Positions 7-67 (GSVKWFNETK…GKKGPQAAQV (61 aa)) constitute a CSD domain.

The protein localises to the cytoplasm. This Vibrio cholerae serotype O1 (strain ATCC 39315 / El Tor Inaba N16961) protein is Cold shock-like protein CspA (cspA).